Consider the following 392-residue polypeptide: Serpin B11 (392 aa).

An RCL region spans residues 341–365 (EEGTEAAAATGDSIAVKSLPMRAQF).

Belongs to the serpin family. Ov-serpin subfamily. As to expression, detected in a restricted number of tissues, including lung, placenta, prostate, and tonsil.

It is found in the cytoplasm. In terms of biological role, has no serine protease inhibitory activity, probably due to variants in the scaffold impairing conformational change. The polypeptide is Serpin B11 (SERPINB11) (Homo sapiens (Human)).